The chain runs to 306 residues: NAD kinase 1 (306 aa).

The active-site Proton acceptor is Asp67. Residues 67–68, 149–150, and Asp181 contribute to the NAD(+) site; these read DG and ND.

It belongs to the NAD kinase family. Requires a divalent metal cation as cofactor.

It is found in the cytoplasm. The catalysed reaction is NAD(+) + ATP = ADP + NADP(+) + H(+). Functionally, involved in the regulation of the intracellular balance of NAD and NADP, and is a key enzyme in the biosynthesis of NADP. Catalyzes specifically the phosphorylation on 2'-hydroxyl of the adenosine moiety of NAD to yield NADP. In Synechococcus sp. (strain ATCC 27144 / PCC 6301 / SAUG 1402/1) (Anacystis nidulans), this protein is NAD kinase 1.